Reading from the N-terminus, the 113-residue chain is EVQLQESGPSLVKPSQTLSLTCSVTGDSITSDYWNWIRKFPGNKLEHMGYISYSGSTYYNPSLKSRISITRDTSKNQYYLQLNSVTSEDTATYYCTSLRFAYWGQGTLVTVSA.

The polypeptide is Ig heavy chain V region 36-60 (Mus musculus (Mouse)).